A 40-amino-acid polypeptide reads, in one-letter code: Photosystem II reaction center protein J (40 aa).

The helical transmembrane segment at 8-28 (IPLWLIGTVTGIPVIGSMGIF) threads the bilayer.

The protein belongs to the PsbJ family. PSII is composed of 1 copy each of membrane proteins PsbA, PsbB, PsbC, PsbD, PsbE, PsbF, PsbH, PsbI, PsbJ, PsbK, PsbL, PsbM, PsbT, PsbX, PsbY, PsbZ, Psb30/Ycf12, at least 3 peripheral proteins of the oxygen-evolving complex and a large number of cofactors. It forms dimeric complexes.

It localises to the plastid. The protein localises to the chloroplast thylakoid membrane. Functionally, one of the components of the core complex of photosystem II (PSII). PSII is a light-driven water:plastoquinone oxidoreductase that uses light energy to abstract electrons from H(2)O, generating O(2) and a proton gradient subsequently used for ATP formation. It consists of a core antenna complex that captures photons, and an electron transfer chain that converts photonic excitation into a charge separation. The chain is Photosystem II reaction center protein J from Illicium oligandrum (Star anise).